A 181-amino-acid chain; its full sequence is Large ribosomal subunit protein uL10 (181 aa).

Belongs to the universal ribosomal protein uL10 family. As to quaternary structure, part of the ribosomal stalk of the 50S ribosomal subunit. The N-terminus interacts with L11 and the large rRNA to form the base of the stalk. The C-terminus forms an elongated spine to which L12 dimers bind in a sequential fashion forming a multimeric L10(L12)X complex.

Forms part of the ribosomal stalk, playing a central role in the interaction of the ribosome with GTP-bound translation factors. This chain is Large ribosomal subunit protein uL10, found in Bradyrhizobium diazoefficiens (strain JCM 10833 / BCRC 13528 / IAM 13628 / NBRC 14792 / USDA 110).